Reading from the N-terminus, the 476-residue chain is UDP-N-acetylmuramate--L-alanine ligase (476 aa).

An ATP-binding site is contributed by 123–129 (GTHGKTT).

It belongs to the MurCDEF family.

Its subcellular location is the cytoplasm. It carries out the reaction UDP-N-acetyl-alpha-D-muramate + L-alanine + ATP = UDP-N-acetyl-alpha-D-muramoyl-L-alanine + ADP + phosphate + H(+). It functions in the pathway cell wall biogenesis; peptidoglycan biosynthesis. Cell wall formation. The chain is UDP-N-acetylmuramate--L-alanine ligase from Nitrosococcus oceani (strain ATCC 19707 / BCRC 17464 / JCM 30415 / NCIMB 11848 / C-107).